Consider the following 112-residue polypeptide: Transmembrane protein 14C (112 aa).

4 helical membrane-spanning segments follow: residues 7-27 (VVPL…GGII), 32-52 (AGSV…SLGA), 62-82 (VWVF…RFYH), and 86-106 (FMPA…VGVS).

This sequence belongs to the TMEM14 family.

The protein resides in the mitochondrion membrane. Required for normal heme biosynthesis. This Pongo abelii (Sumatran orangutan) protein is Transmembrane protein 14C (TMEM14C).